Consider the following 93-residue polypeptide: Putative pterin-4-alpha-carbinolamine dehydratase (93 aa).

This sequence belongs to the pterin-4-alpha-carbinolamine dehydratase family.

It catalyses the reaction (4aS,6R)-4a-hydroxy-L-erythro-5,6,7,8-tetrahydrobiopterin = (6R)-L-erythro-6,7-dihydrobiopterin + H2O. The sequence is that of Putative pterin-4-alpha-carbinolamine dehydratase from Nostoc sp. (strain PCC 7120 / SAG 25.82 / UTEX 2576).